The chain runs to 194 residues: MPNWGGGAKCGACEKTVYHAEEIQCNGRSFHKTCFHCMACRKALDSTTVAAHESEIYCKVCYGRRYGPKGIGYGQGAGCLSTDTGEHLGLQFQQSPKPARSVTTSNPSKFTAKFGESEKCPRCGKSVYAAEKVMGGGKPWHKTCFRCAICGKSLESTNVTDKDGELYCKVCYAKNFGPTGIGFGGLTQQVEKKE.

The interaction with TCAP stretch occupies residues 1 to 5 (MPNWG). The 52-residue stretch at 10-61 (CGACEKTVYHAEEIQCNGRSFHKTCFHCMACRKALDSTTVAAHESEIYCKVC) folds into the LIM zinc-binding 1 domain. Residues 64–69 (RRYGPK) carry the Nuclear localization signal motif. Residues 94–105 (QSPKPARSVTTS) form an interaction with CLF2 and isoform 2 region. S95 and S153 each carry phosphoserine. One can recognise an LIM zinc-binding 2 domain in the interval 120–171 (CPRCGKSVYAAEKVMGGGKPWHKTCFRCAICGKSLESTNVTDKDGELYCKVC).

As to quaternary structure, self-associates. Oligomeric in the cytoplasm and monomeric in the nucleus. Homooligomers preferentially form along the actin cytoskeleton. Isoform 2 interacts with isoform 1. Isoform 1 but not isoform 2 interacts with MYOD1 and MYOG. Isoform 1 interacts with TCAP, ACTN2 and NRAP. Isoform 2 interacts with TCAP and alpha-actinin. Interacts with LDHD. Interacts (via N-terminus)with GLRX3 (via C-terminus) and PPP3CA; GLRX3 and calcineurin compete for interaction with CSRP3. Interacts with MYF6. Interacts with CFL2; the stoichiometry influences F-actin depolymerization and possibly two molecules of CFL2 can interact with one molecule of CSRP3 resulting in the highest functional impact; the interaction is stronger with phosphorylated CFL2. Post-translationally, phosphorylated by PKC/PRKCA. As to expression, cardiac and slow-twitch skeletal muscles. Isoform 2 is expressed in striated muscle. Isoform 2 is specifically expressed at higher levels in patients with neuromuscular diseases, such as limb-girdle muscular dystrophy 2A (LGMD2A), Duchenne muscular dystrophy (DMD) and dermatomyositis.

It is found in the nucleus. Its subcellular location is the cytoplasm. It localises to the cytoskeleton. The protein resides in the myofibril. The protein localises to the sarcomere. It is found in the z line. Its function is as follows. Positive regulator of myogenesis. Acts as a cofactor for myogenic bHLH transcription factors such as MYOD1, and probably MYOG and MYF6. Enhances the DNA-binding activity of the MYOD1:TCF3 isoform E47 complex and may promote formation of a functional MYOD1:TCF3 isoform E47:MEF2A complex involved in myogenesis. Plays a crucial and specific role in the organization of cytosolic structures in cardiomyocytes. Could play a role in mechanical stretch sensing. May be a scaffold protein that promotes the assembly of interacting proteins at Z-line structures. It is essential for calcineurin anchorage to the Z line. Required for stress-induced calcineurin-NFAT activation. The role in regulation of cytoskeleton dynamics by association with CFL2 is reported conflictingly: Shown to enhance CFL2-mediated F-actin depolymerization dependent on the CSRP3:CFL2 molecular ratio, and also shown to reduce the ability of CLF1 and CFL2 to enhance actin depolymerization. Proposed to contribute to the maintenance of muscle cell integrity through an actin-based mechanism. Can directly bind to actin filaments, cross-link actin filaments into bundles without polarity selectivity and protect them from dilution- and cofilin-mediated depolymerization; the function seems to involve its self-association. In vitro can inhibit PKC/PRKCA activity. Proposed to be involved in cardiac stress signaling by down-regulating excessive PKC/PRKCA signaling. Functionally, may play a role in early sarcomere organization. Overexpression in myotubes negatively regulates myotube differentiation. By association with isoform 1 and thus changing the CSRP3 isoform 1:CFL2 stoichiometry is proposed to down-regulate CFL2-mediated F-actin depolymerization. This is Cysteine and glycine-rich protein 3 (CSRP3) from Homo sapiens (Human).